An 862-amino-acid chain; its full sequence is Leucine--tRNA ligase (862 aa).

Residues 42 to 52 (PYPSGRLHMGH) carry the 'HIGH' region motif. A 'KMSKS' region motif is present at residues 622-626 (KMSKS). Residue K625 coordinates ATP.

This sequence belongs to the class-I aminoacyl-tRNA synthetase family.

The protein resides in the cytoplasm. The enzyme catalyses tRNA(Leu) + L-leucine + ATP = L-leucyl-tRNA(Leu) + AMP + diphosphate. This is Leucine--tRNA ligase from Vibrio campbellii (strain ATCC BAA-1116).